A 175-amino-acid chain; its full sequence is Arsenite oxidase subunit AioB (175 aa).

Positions 1-32 form a signal peptide, tat-type signal; sequence MSDTINLTRRGFLKVSGSGVAVAATLSPIASA. The region spanning 62 to 158 is the Rieske domain; it reads NEPVSFTYPD…LRYDEASDAL (97 aa). [2Fe-2S] cluster contacts are provided by Cys102, His104, Cys120, and His123. Cys107 and Cys122 are disulfide-bonded.

This sequence belongs to the AOX family. As to quaternary structure, heterodimer consisting of a large and a small subunit. It depends on [2Fe-2S] cluster as a cofactor. In terms of processing, predicted to be exported by the Tat system. The position of the signal peptide cleavage has not been experimentally proven.

The catalysed reaction is 2 oxidized [azurin] + arsenite + H2O = 2 reduced [azurin] + arsenate + 3 H(+). Involved in the detoxification of arsenic. Oxidizes As(III)O3(3-) (arsenite) to the somewhat less toxic As(V)O4(3-) (arsenate). The sequence is that of Arsenite oxidase subunit AioB (aioB) from Alcaligenes faecalis.